The primary structure comprises 410 residues: LL-diaminopimelate aminotransferase (410 aa).

Substrate-binding residues include tyrosine 15 and glycine 42. Pyridoxal 5'-phosphate-binding positions include tyrosine 72, 108 to 109, tyrosine 132, asparagine 188, tyrosine 219, and 247 to 249; these read AK and SFS. Positions 109, 132, and 188 each coordinate substrate. Position 250 is an N6-(pyridoxal phosphate)lysine (lysine 250). Pyridoxal 5'-phosphate-binding residues include arginine 258 and asparagine 293. Positions 293 and 389 each coordinate substrate.

The protein belongs to the class-I pyridoxal-phosphate-dependent aminotransferase family. LL-diaminopimelate aminotransferase subfamily. Homodimer. Requires pyridoxal 5'-phosphate as cofactor.

The catalysed reaction is (2S,6S)-2,6-diaminopimelate + 2-oxoglutarate = (S)-2,3,4,5-tetrahydrodipicolinate + L-glutamate + H2O + H(+). Its pathway is amino-acid biosynthesis; L-lysine biosynthesis via DAP pathway; LL-2,6-diaminopimelate from (S)-tetrahydrodipicolinate (aminotransferase route): step 1/1. Involved in the synthesis of meso-diaminopimelate (m-DAP or DL-DAP), required for both lysine and peptidoglycan biosynthesis. Catalyzes the direct conversion of tetrahydrodipicolinate to LL-diaminopimelate. The chain is LL-diaminopimelate aminotransferase from Bacteroides thetaiotaomicron (strain ATCC 29148 / DSM 2079 / JCM 5827 / CCUG 10774 / NCTC 10582 / VPI-5482 / E50).